An 847-amino-acid polypeptide reads, in one-letter code: Ras GTPase-activating protein 2 (847 aa).

Over residues 1 to 18 (MAAAAPAAAALTEAPAVP) the composition is skewed to low complexity. The disordered stretch occupies residues 1–31 (MAAAAPAAAALTEAPAVPGTAEPETGDEDSR). Residue Ala2 is modified to N-acetylalanine. 2 C2 domains span residues 19–137 (GTAE…ETWF) and 148–288 (VQGK…QAWY). One can recognise a Ras-GAP domain in the interval 371–588 (NKLVPFITAV…TDVKKFLDEI (218 aa)). At Ser554 the chain carries Phosphoserine. The 102-residue stretch at 603-704 (VHLKEGEMYK…WIDMLCRVSR (102 aa)) folds into the PH domain. Residues 706–742 (NHNRLSSFHPSAYLNGNWLCCQETSEGTPGCKPCTAG) form a Btk-type zinc finger. His714, Cys725, Cys726, and Cys736 together coordinate Zn(2+). A disordered region spans residues 819–847 (DEPHEKYRKKRSSSAKYGSKENPIVGKIS).

As to expression, widely expressed. Higher expression in brain, placenta, and kidney.

It localises to the cell membrane. Inhibitory regulator of the Ras-cyclic AMP pathway. May bind inositol tetrakisphosphate (IP4) and phospholipids. The protein is Ras GTPase-activating protein 2 (Rasa2) of Rattus norvegicus (Rat).